We begin with the raw amino-acid sequence, 81 residues long: Photosystem I iron-sulfur center (81 aa).

4Fe-4S ferredoxin-type domains are found at residues 2 to 31 (SHSV…MIPW) and 39 to 68 (IAPA…VRVY). [4Fe-4S] cluster-binding residues include Cys-11, Cys-14, Cys-17, Cys-21, Cys-48, Cys-51, Cys-54, and Cys-58.

In terms of assembly, the eukaryotic PSI reaction center is composed of at least 11 subunits. The cofactor is [4Fe-4S] cluster.

The protein localises to the plastid. The protein resides in the chloroplast thylakoid membrane. The catalysed reaction is reduced [plastocyanin] + hnu + oxidized [2Fe-2S]-[ferredoxin] = oxidized [plastocyanin] + reduced [2Fe-2S]-[ferredoxin]. Functionally, apoprotein for the two 4Fe-4S centers FA and FB of photosystem I (PSI); essential for photochemical activity. FB is the terminal electron acceptor of PSI, donating electrons to ferredoxin. The C-terminus interacts with PsaA/B/D and helps assemble the protein into the PSI complex. Required for binding of PsaD and PsaE to PSI. PSI is a plastocyanin-ferredoxin oxidoreductase, converting photonic excitation into a charge separation, which transfers an electron from the donor P700 chlorophyll pair to the spectroscopically characterized acceptors A0, A1, FX, FA and FB in turn. This Drimys granadensis protein is Photosystem I iron-sulfur center.